The primary structure comprises 459 residues: Prenyltransferase penI (459 aa).

Residues 107–108 and E111 contribute to the L-tryptophan site; that span reads VV. Substrate contacts are provided by R126, R276, K278, Y280, and Y384.

This sequence belongs to the tryptophan dimethylallyltransferase family.

It catalyses the reaction quinolinone B + dimethylallyl diphosphate = peniprequinolone + diphosphate. It functions in the pathway secondary metabolite biosynthesis. Its pathway is alkaloid biosynthesis. It participates in mycotoxin biosynthesis. Its function is as follows. Prenyltransferase; part of the gene cluster that mediates the biosynthesis of penigequinolones, potent insecticidal alkaloids that contain a highly modified 10-carbon prenyl group. The first stage is catalyzed by the nonribosomal peptide synthetase penN that condenses anthranilic acid and O-methyl-L-tyrosine to produce 4'-methoxycyclopeptin. 4'-methoxycyclopeptin is then converted to 4'-methoxydehydrocyclopeptin by the ketoglutarate-dependent dioxygenase penM through dehydrogenation to form a double bond between C-alpha and C-beta of the O-methyltyrosine side chain. PenM also converts its first product methoxydehydrocyclopeptin to 4'-methoxycyclopenin. The following conversion of 4'methoxycyclopenin into 4'-methoxyviridicatin is catalyzed by the cyclopenase penL. 4'-methoxyviridicatin is the precursor of quinolone natural products, and is further converted to quinolinone B. The prenyltransferase penI then catalyzes the canonical Friedel-Crafts alkylation of quinolinone B with dimethylallyl cation to yield dimethylallyl quinolone, which is subjected to FAD-dependent dehydrogenation by the FAD-linked oxidoreductase penH to yield conjugated aryl diene. The delta(3') double bond then serves as the site of the second alkylation with DMAPP catalyzed by the prenyltransferase penG to yield a carbenium ion intermediate, which can be attacked by H(2)O to yield a styrenyl quinolone containing a C3'-hydroxyprenyl chain, or undergo cyclization to yield yaequinolones J1 and J2. The conversion of the styrenyl quinolone into the tetrahydrofuran-containing yaequinolone C is performed by the FAD-dependent monooxygenase penE and involves epoxidation of the terminal C7'-C8' olefin, followed by epoxide ring opening initiated by the C3' hydroxyl group. The predicted cysteine hydrolase penJ acts as an epoxide hydrolase that enhances the rate of the 5-exo-tet cyclization step, increasing the yield of yaequinolone C. PenF catalyzes the cationic rearrangement of the epoxide formed by penE (before ring opening to produce yaequinolone C) into yaequinolone D. Finally, the short-chain dehydrogenase/reductase (SDR)-like reductase penD, catalyzes both the dehydration of yaequinolone D and the reduction of the resulting oxonium to yield penigequinolone. The polypeptide is Prenyltransferase penI (Penicillium thymicola).